The chain runs to 196 residues: Charged multivesicular body protein 1a (196 aa).

Position 1 is an N-acetylmethionine (Met1). Positions 5 to 42 (LFQLKFTAKQLEKLAKKAEKDSKAEQAKVKKALQQKNV) form a coiled coil. At Ser101 the chain carries Phosphoserine. Positions 102–124 (AMDLQKVSAVMDRFEQQVQNLDV) form a coiled coil. Phosphoserine is present on Ser173. An MIT-interacting motif motif is present at residues 185–195 (DQLSRRLAALR).

It belongs to the SNF7 family. Probable peripherally associated component of the endosomal sorting required for transport complex III (ESCRT-III). ESCRT-III components are thought to multimerize to form a flat lattice on the perimeter membrane of the endosome. Several assembly forms of ESCRT-III may exist that interact and act sequentially. Self-associates. Interacts with CHMP1B. Interacts with VPS4A. Interacts with VPS4B. Interacts with PHF1. Interacts with IST1. Interacts with MITD1. Highly expressed in adult heart, kidney and liver. Expressed at lower levels in adult colon, spleen, lung, brain, testis and muscle. Also expressed in myoblasts and embryo fibroblasts.

Its subcellular location is the cytoplasm. The protein localises to the endosome membrane. It is found in the nucleus matrix. Functionally, probable peripherally associated component of the endosomal sorting required for transport complex III (ESCRT-III) which is involved in multivesicular bodies (MVBs) formation and sorting of endosomal cargo proteins into MVBs. MVBs contain intraluminal vesicles (ILVs) that are generated by invagination and scission from the limiting membrane of the endosome and mostly are delivered to lysosomes enabling degradation of membrane proteins, such as stimulated growth factor receptors, lysosomal enzymes and lipids. The MVB pathway appears to require the sequential function of ESCRT-O, -I,-II and -III complexes. ESCRT-III proteins mostly dissociate from the invaginating membrane before the ILV is released. The ESCRT machinery also functions in topologically equivalent membrane fission events, such as the terminal stages of cytokinesis. ESCRT-III proteins are believed to mediate the necessary vesicle extrusion and/or membrane fission activities, possibly in conjunction with the AAA ATPase VPS4. Involved in cytokinesis. Involved in recruiting VPS4A and/or VPS4B to the midbody of dividing cells. May also be involved in chromosome condensation. Targets the Polycomb group (PcG) protein BMI1/PCGF4 to regions of condensed chromatin. May play a role in stable cell cycle progression and in PcG gene silencing. This chain is Charged multivesicular body protein 1a (Chmp1a), found in Mus musculus (Mouse).